The chain runs to 156 residues: Flagellar assembly factor FliW (156 aa).

The protein belongs to the FliW family. As to quaternary structure, interacts with translational regulator CsrA and flagellin(s).

Its subcellular location is the cytoplasm. Its function is as follows. Acts as an anti-CsrA protein, binds CsrA and prevents it from repressing translation of its target genes, one of which is flagellin. Binds to flagellin and participates in the assembly of the flagellum. The sequence is that of Flagellar assembly factor FliW from Pseudothermotoga lettingae (strain ATCC BAA-301 / DSM 14385 / NBRC 107922 / TMO) (Thermotoga lettingae).